Consider the following 182-residue polypeptide: ADP-ribosylation factor-like protein 3 (182 aa).

G2 is lipidated: N-myristoyl glycine. S5 carries the post-translational modification Phosphoserine. Residues 24–31 (GLDNAGKT), T48, 67–71 (DIGGQ), G70, 126–129 (NKQD), and 159–161 (SAL) contribute to the GTP site. Mg(2+)-binding residues include T31 and T48.

It belongs to the small GTPase superfamily. Arf family. In terms of assembly, found in a complex with ARL3, RP2 and UNC119 (or UNC119B); RP2 induces hydrolysis of GTP ARL3 in the complex, leading to the release of UNC119 (or UNC119B). Interacts with RP2; interaction is direct and stimulated with the activated GTP-bound form of ARL3. Interacts with SYS1. Interacts with ARL2BP; the GTP-bound form interacts with ARL2BP. Microtubule-associated protein. Does not interact with TBCC. Interacts with RP2. Interacts with PDE6D; the interaction occurs specifically with the GTP-bound form of ARL3. Interacts with GGA1; the interaction recruits PKD1:PKD2 complex to trans-Golgi network and is required for ciliary targeting of PKD1:PKD2 complex. Interacts with DNAAF9.

It is found in the golgi apparatus membrane. The protein resides in the cytoplasm. The protein localises to the cytoskeleton. It localises to the spindle. Its subcellular location is the nucleus. It is found in the microtubule organizing center. The protein resides in the centrosome. The protein localises to the cell projection. It localises to the cilium. Functionally, small GTP-binding protein which cycles between an inactive GDP-bound and an active GTP-bound form, and the rate of cycling is regulated by guanine nucleotide exchange factors (GEF) and GTPase-activating proteins (GAP). Required for normal cytokinesis and cilia signaling. Requires assistance from GTPase-activating proteins (GAPs) like RP2 and PDE6D, in order to cycle between inactive GDP-bound and active GTP-bound forms. Required for targeting proteins to the cilium, including myristoylated NPHP3 and prenylated INPP5E. Targets NPHP3 to the ciliary membrane by releasing myristoylated NPHP3 from UNC119B cargo adapter into the cilium. Required for PKD1:PKD2 complex targeting from the trans-Golgi network to the cilium. This Sus scrofa (Pig) protein is ADP-ribosylation factor-like protein 3 (ARL3).